The following is a 283-amino-acid chain: Polyamine aminopropyltransferase (283 aa).

Residues 2-237 (ELWYTEEHTD…GHWLFGFASK (236 aa)) form the PABS domain. Q31 contributes to the S-methyl-5'-thioadenosine binding site. 2 residues coordinate spermidine: H62 and D86. Residues E106 and 137-138 (DG) contribute to the S-methyl-5'-thioadenosine site. Residue D155 is the Proton acceptor of the active site. Residue 155-158 (DSTD) participates in spermidine binding. P162 provides a ligand contact to S-methyl-5'-thioadenosine.

Belongs to the spermidine/spermine synthase family. Homodimer or homotetramer.

Its subcellular location is the cytoplasm. It catalyses the reaction S-adenosyl 3-(methylsulfanyl)propylamine + putrescine = S-methyl-5'-thioadenosine + spermidine + H(+). It functions in the pathway amine and polyamine biosynthesis; spermidine biosynthesis; spermidine from putrescine: step 1/1. Functionally, catalyzes the irreversible transfer of a propylamine group from the amino donor S-adenosylmethioninamine (decarboxy-AdoMet) to putrescine (1,4-diaminobutane) to yield spermidine. This Clostridium perfringens (strain 13 / Type A) protein is Polyamine aminopropyltransferase.